Reading from the N-terminus, the 565-residue chain is Perivitellin-2 67 kDa subunit (565 aa).

The N-terminal stretch at 1–26 (MSQLRWWVVSQLLLLIVVCILDHSEG) is a signal peptide. The region spanning 27–340 (ARVCPKIVPG…AKVANLDRLT (314 aa)) is the MACPF domain.

In terms of assembly, perivitellin-2 is a heterooctamer of 4 identical 98 kDa heterodimers, each composed of one 31 kDa and one 67 kDa subunits. The 98 kDa heterodimer subunits are held together by disulfide bridges while the heterodimers are assembled into the native perivitellin-2 octamer by non-covalent forces. Glycosylated. Contains four O-linked and one N-linked oligosaccharide bonds. The protein contains 2.5% of carbohydrates (high levels of mannose, galactose, and NAcGlucosamine, and small amounts of NacGalactosamine). In terms of processing, PV2 is a very high density lipoprotein (VHDL). It contains 3.75% of lipids. The major lipid classes are free sterols and phospholipids and also have significant quantities of energy-providing triacylglycerides and free fatty acids. As to expression, produced by albumen secretory cells. Found in developing eggs.

It is found in the secreted. The protein localises to the target cell membrane. Its function is as follows. The egg defensive protein perivitellin-2 is a pore-forming two-subunit glycoprotein that affects both the nervous and digestive systems of mammals. In addition, it is a source of both structural and energetic molecules during embryonic development. The tachylectin subunit (31 kDa) binds target membranes while the MACPF subunit (67 kDa) disrupts lipid bilayers forming large pores altering the plasma membrance conductance. Both in vivo and in vitro, the protein shows wide pH range stability and is resistant to enzymatic proteolysis from gastrointestinal environments. It specifically binds mature enterocytes but does not cause cell disruption on caco-2 (human colorectal adenocarcinoma cells) or rat intestinal cells. After oral administration to mice, it binds enterocytes and induces large dose-dependent morphological changes on their small intestine mucosa, reducing the absorptive surface. Additionally, it is detected in the Peyer's patches where it activates lymphoid follicles and triggers apoptosis. The toxin can also traverse the intestinal barrier and induce oral adaptive immunity with evidence of circulating antibody response. The toxin also shows hemagglutination properties thanks to the tachylectin subunit, but does not show hemolytic activity. In addition to enterotoxin activity, the toxin also acts as a neurotoxin, since an intraperitoneal injection induces paralysis of the mice rear limbs, followed by death. The polypeptide is Perivitellin-2 67 kDa subunit (Pomacea canaliculata (Golden apple snail)).